We begin with the raw amino-acid sequence, 633 residues long: Acetylcholinesterase (633 aa).

The first 23 residues, 1 to 23 (MKILDALLFPVIFIMFFIHLSIA), serve as a signal peptide directing secretion. A disulfide bridge links Cys-91 with Cys-118. 2 N-linked (GlcNAc...) asparagine glycosylation sites follow: Asn-133 and Asn-184. Residue Ser-225 is the Acyl-ester intermediate of the active site. A disulfide bond links Cys-279 and Cys-290. The N-linked (GlcNAc...) asparagine glycan is linked to Asn-283. Glu-352 functions as the Charge relay system in the catalytic mechanism. Residue Asn-368 is glycosylated (N-linked (GlcNAc...) asparagine). A disulfide bond links Cys-427 and Cys-579. The Charge relay system role is filled by His-494. 2 N-linked (GlcNAc...) asparagine glycosylation sites follow: Asn-511 and Asn-591.

Belongs to the type-B carboxylesterase/lipase family.

The protein resides in the synapse. It localises to the secreted. It is found in the cell membrane. It carries out the reaction acetylcholine + H2O = choline + acetate + H(+). In terms of biological role, terminates signal transduction at the neuromuscular junction by rapid hydrolysis of the acetylcholine released into the synaptic cleft. In Electrophorus electricus (Electric eel), this protein is Acetylcholinesterase (ache).